The primary structure comprises 227 residues: Cytochrome c oxidase subunit 2 (227 aa).

At 1–14 (MAYPYELGFQDASS) the chain is on the mitochondrial intermembrane side. Residues 15–45 (PIMEELLHFHDHTLMIVFLISTLVLYLITIM) traverse the membrane as a helical segment. Residues 46 to 59 (LTTKLTHTSTMDAQ) lie on the Mitochondrial matrix side of the membrane. Residues 60–87 (EIETIWTILPAIILILIALPSLRILYMM) traverse the membrane as a helical segment. The Mitochondrial intermembrane portion of the chain corresponds to 88–227 (DEINSPSLTV…DFEIWSSSML (140 aa)). 6 residues coordinate Cu cation: His161, Cys196, Glu198, Cys200, His204, and Met207. Residue Glu198 coordinates Mg(2+).

The protein belongs to the cytochrome c oxidase subunit 2 family. Component of the cytochrome c oxidase (complex IV, CIV), a multisubunit enzyme composed of 14 subunits. The complex is composed of a catalytic core of 3 subunits MT-CO1, MT-CO2 and MT-CO3, encoded in the mitochondrial DNA, and 11 supernumerary subunits COX4I, COX5A, COX5B, COX6A, COX6B, COX6C, COX7A, COX7B, COX7C, COX8 and NDUFA4, which are encoded in the nuclear genome. The complex exists as a monomer or a dimer and forms supercomplexes (SCs) in the inner mitochondrial membrane with NADH-ubiquinone oxidoreductase (complex I, CI) and ubiquinol-cytochrome c oxidoreductase (cytochrome b-c1 complex, complex III, CIII), resulting in different assemblies (supercomplex SCI(1)III(2)IV(1) and megacomplex MCI(2)III(2)IV(2)). Found in a complex with TMEM177, COA6, COX18, COX20, SCO1 and SCO2. Interacts with TMEM177 in a COX20-dependent manner. Interacts with COX20. Interacts with COX16. The cofactor is Cu cation.

It localises to the mitochondrion inner membrane. The catalysed reaction is 4 Fe(II)-[cytochrome c] + O2 + 8 H(+)(in) = 4 Fe(III)-[cytochrome c] + 2 H2O + 4 H(+)(out). In terms of biological role, component of the cytochrome c oxidase, the last enzyme in the mitochondrial electron transport chain which drives oxidative phosphorylation. The respiratory chain contains 3 multisubunit complexes succinate dehydrogenase (complex II, CII), ubiquinol-cytochrome c oxidoreductase (cytochrome b-c1 complex, complex III, CIII) and cytochrome c oxidase (complex IV, CIV), that cooperate to transfer electrons derived from NADH and succinate to molecular oxygen, creating an electrochemical gradient over the inner membrane that drives transmembrane transport and the ATP synthase. Cytochrome c oxidase is the component of the respiratory chain that catalyzes the reduction of oxygen to water. Electrons originating from reduced cytochrome c in the intermembrane space (IMS) are transferred via the dinuclear copper A center (CU(A)) of subunit 2 and heme A of subunit 1 to the active site in subunit 1, a binuclear center (BNC) formed by heme A3 and copper B (CU(B)). The BNC reduces molecular oxygen to 2 water molecules using 4 electrons from cytochrome c in the IMS and 4 protons from the mitochondrial matrix. In Cavia aperea (Brazilian guinea pig), this protein is Cytochrome c oxidase subunit 2 (MT-CO2).